The following is a 163-amino-acid chain: ATP synthase subunit b (163 aa).

A helical membrane pass occupies residues 13–33; it reads SFILFVWFCMKYIWPPIIFAI.

It belongs to the ATPase B chain family. In terms of assembly, F-type ATPases have 2 components, F(1) - the catalytic core - and F(0) - the membrane proton channel. F(1) has five subunits: alpha(3), beta(3), gamma(1), delta(1), epsilon(1). F(0) has three main subunits: a(1), b(2) and c(10-14). The alpha and beta chains form an alternating ring which encloses part of the gamma chain. F(1) is attached to F(0) by a central stalk formed by the gamma and epsilon chains, while a peripheral stalk is formed by the delta and b chains.

Its subcellular location is the cell membrane. F(1)F(0) ATP synthase produces ATP from ADP in the presence of a proton or sodium gradient. F-type ATPases consist of two structural domains, F(1) containing the extramembraneous catalytic core and F(0) containing the membrane proton channel, linked together by a central stalk and a peripheral stalk. During catalysis, ATP synthesis in the catalytic domain of F(1) is coupled via a rotary mechanism of the central stalk subunits to proton translocation. Its function is as follows. Component of the F(0) channel, it forms part of the peripheral stalk, linking F(1) to F(0). The chain is ATP synthase subunit b from Buchnera aphidicola subsp. Schizaphis graminum (strain Sg).